We begin with the raw amino-acid sequence, 178 residues long: Cytidylate kinase (178 aa).

7 to 15 (GLPGTGTTT) contacts ATP.

This sequence belongs to the cytidylate kinase family. Type 2 subfamily.

It localises to the cytoplasm. It carries out the reaction CMP + ATP = CDP + ADP. The catalysed reaction is dCMP + ATP = dCDP + ADP. This is Cytidylate kinase from Methanococcus aeolicus (strain ATCC BAA-1280 / DSM 17508 / OCM 812 / Nankai-3).